A 234-amino-acid polypeptide reads, in one-letter code: Leucyl/phenylalanyl-tRNA--protein transferase (234 aa).

The protein belongs to the L/F-transferase family.

It is found in the cytoplasm. The catalysed reaction is N-terminal L-lysyl-[protein] + L-leucyl-tRNA(Leu) = N-terminal L-leucyl-L-lysyl-[protein] + tRNA(Leu) + H(+). The enzyme catalyses N-terminal L-arginyl-[protein] + L-leucyl-tRNA(Leu) = N-terminal L-leucyl-L-arginyl-[protein] + tRNA(Leu) + H(+). It carries out the reaction L-phenylalanyl-tRNA(Phe) + an N-terminal L-alpha-aminoacyl-[protein] = an N-terminal L-phenylalanyl-L-alpha-aminoacyl-[protein] + tRNA(Phe). Its function is as follows. Functions in the N-end rule pathway of protein degradation where it conjugates Leu, Phe and, less efficiently, Met from aminoacyl-tRNAs to the N-termini of proteins containing an N-terminal arginine or lysine. The chain is Leucyl/phenylalanyl-tRNA--protein transferase from Enterobacter sp. (strain 638).